The following is a 456-amino-acid chain: 26S proteasome non-ATPase regulatory subunit 12 (456 aa).

Position 2 is an N-acetylalanine (Ala2). Lys92 is covalently cross-linked (Glycyl lysine isopeptide (Lys-Gly) (interchain with G-Cter in SUMO1); alternate). Lys92 participates in a covalent cross-link: Glycyl lysine isopeptide (Lys-Gly) (interchain with G-Cter in SUMO2); alternate. 2 positions are modified to N6-acetyllysine: Lys221 and Lys368. The PCI domain occupies 242–420; sequence SICKHYRAIY…GIINFQRPKD (179 aa).

It belongs to the proteasome subunit p55 family. In terms of assembly, component of the 19S proteasome regulatory particle complex. The 26S proteasome consists of a 20S core particle (CP) and two 19S regulatory subunits (RP). The regulatory particle is made of a lid composed of 9 subunits including PSMD12, a base containing 6 ATPases and few additional components. Interacts with ERCC6.

Component of the 26S proteasome, a multiprotein complex involved in the ATP-dependent degradation of ubiquitinated proteins. This complex plays a key role in the maintenance of protein homeostasis by removing misfolded or damaged proteins, which could impair cellular functions, and by removing proteins whose functions are no longer required. Therefore, the proteasome participates in numerous cellular processes, including cell cycle progression, apoptosis, or DNA damage repair. This is 26S proteasome non-ATPase regulatory subunit 12 (PSMD12) from Pongo abelii (Sumatran orangutan).